The following is a 647-amino-acid chain: Macrolide export ATP-binding/permease protein MacB (647 aa).

The 239-residue stretch at 5-243 (LELKGIERSY…TQTPSLTSKI (239 aa)) folds into the ABC transporter domain. 41–48 (GASGSGKS) serves as a coordination point for ATP. The next 4 helical transmembrane spans lie at 272-292 (LLTMLGIIIGIASVVTILVIG), 522-542 (LFLTMVAVISLIVGGIGVMNI), 576-596 (ILVCLVGGVLGIGLSYTIAFI), and 610-630 (PIALLSAFACSTAIGVIFGFL).

The protein belongs to the ABC transporter superfamily. Macrolide exporter (TC 3.A.1.122) family. In terms of assembly, homodimer. Part of the tripartite efflux system MacAB-TolC, which is composed of an inner membrane transporter, MacB, a periplasmic membrane fusion protein, MacA, and an outer membrane component, TolC. The complex forms a large protein conduit and can translocate molecules across both the inner and outer membranes. Interacts with MacA.

It localises to the cell inner membrane. Part of the tripartite efflux system MacAB-TolC. MacB is a non-canonical ABC transporter that contains transmembrane domains (TMD), which form a pore in the inner membrane, and an ATP-binding domain (NBD), which is responsible for energy generation. Confers resistance against macrolides. This chain is Macrolide export ATP-binding/permease protein MacB, found in Photorhabdus laumondii subsp. laumondii (strain DSM 15139 / CIP 105565 / TT01) (Photorhabdus luminescens subsp. laumondii).